A 532-amino-acid chain; its full sequence is Bifunctional purine biosynthesis protein PurH (532 aa).

The 147-residue stretch at 1–147 (MAKIKRALIS…KNYRSVTVVT (147 aa)) folds into the MGS-like domain.

Belongs to the PurH family.

It carries out the reaction (6R)-10-formyltetrahydrofolate + 5-amino-1-(5-phospho-beta-D-ribosyl)imidazole-4-carboxamide = 5-formamido-1-(5-phospho-D-ribosyl)imidazole-4-carboxamide + (6S)-5,6,7,8-tetrahydrofolate. The enzyme catalyses IMP + H2O = 5-formamido-1-(5-phospho-D-ribosyl)imidazole-4-carboxamide. The protein operates within purine metabolism; IMP biosynthesis via de novo pathway; 5-formamido-1-(5-phospho-D-ribosyl)imidazole-4-carboxamide from 5-amino-1-(5-phospho-D-ribosyl)imidazole-4-carboxamide (10-formyl THF route): step 1/1. It functions in the pathway purine metabolism; IMP biosynthesis via de novo pathway; IMP from 5-formamido-1-(5-phospho-D-ribosyl)imidazole-4-carboxamide: step 1/1. This chain is Bifunctional purine biosynthesis protein PurH, found in Magnetococcus marinus (strain ATCC BAA-1437 / JCM 17883 / MC-1).